Consider the following 440-residue polypeptide: Xylose isomerase (440 aa).

Active-site residues include His101 and Asp104. Positions 232, 268, 271, 296, 307, 309, and 339 each coordinate Mg(2+).

It belongs to the xylose isomerase family. Homotetramer. Mg(2+) serves as cofactor.

The protein localises to the cytoplasm. The enzyme catalyses alpha-D-xylose = alpha-D-xylulofuranose. The chain is Xylose isomerase from Enterobacter sp. (strain 638).